Here is a 322-residue protein sequence, read N- to C-terminus: Malate dehydrogenase (322 aa).

NAD(+) contacts are provided by residues 10-15 (GSGQIG) and D34. Residues R83 and R89 each contribute to the substrate site. NAD(+) is bound by residues N96 and 119–121 (ITN). The substrate site is built by N121 and R152. The Proton acceptor role is filled by H176.

Belongs to the LDH/MDH superfamily. MDH type 3 family.

It carries out the reaction (S)-malate + NAD(+) = oxaloacetate + NADH + H(+). Its function is as follows. Catalyzes the reversible oxidation of malate to oxaloacetate. This is Malate dehydrogenase from Bradyrhizobium diazoefficiens (strain JCM 10833 / BCRC 13528 / IAM 13628 / NBRC 14792 / USDA 110).